The chain runs to 396 residues: N-terminal EF-hand calcium-binding protein 3 (396 aa).

The span at 14 to 34 (PPAPQPQPQTPRHPQLAPDPG) shows a compositional bias: pro residues. The interval 14–36 (PPAPQPQPQTPRHPQLAPDPGPA) is disordered. An EF-hand domain is found at 36–71 (AGHTLFQDVFRRADKNDDGKLSFEEFQNYFADGVLS). Residues Asp-49, Asn-51, Asp-53, Lys-55, and Glu-60 each coordinate Ca(2+). The required for interaction with APBA3 stretch occupies residues 181 to 190 (VEAQSRLCGS). The tract at residues 197–220 (ALRSVSRSSTWSPGSSDTGRSSEA) is disordered. Over residues 206-217 (TWSPGSSDTGRS) the composition is skewed to polar residues. The ABM domain maps to 296–385 (LMAQRQVQVA…RAPDTLTTVF (90 aa)).

In terms of assembly, interacts with the N-terminal domain of APBA2. Interacts with NEK2. Interacts with APBA3; APBA3 seems to mediate the interaction between NECAB3 and HIF1AN. Phosphorylated by NEK2. As to expression, strongly expressed in heart and skeletal muscle, moderately in brain and pancreas.

Its subcellular location is the golgi apparatus. Its function is as follows. Inhibits the interaction of APBA2 with amyloid-beta precursor protein (APP), and hence allows formation of amyloid-beta. May enhance the activity of HIF1A and thus promote glycolysis under normoxic conditions; the function requires its ABM domain and may implicate the stabilization of the interaction between HIF1AN and APBA3. The polypeptide is N-terminal EF-hand calcium-binding protein 3 (NECAB3) (Homo sapiens (Human)).